The chain runs to 202 residues: Nascent polypeptide-associated complex subunit alpha (202 aa).

The span at 1–19 (MADPRVEEIVEEETPKQTV) shows a compositional bias: basic and acidic residues. The disordered stretch occupies residues 1-41 (MADPRVEEIVEEETPKQTVEDAGSDSESEAGEANIPAGAAV). Residues 45 to 110 (SRNEKKARKA…AKIEDLNSQA (66 aa)) enclose the NAC-A/B domain. A compositionally biased stretch (low complexity) spans 117-127 (QLAAAEAAAGE). A disordered region spans residues 117-165 (QLAAAEAAAGEHAGHDHEHDLGTKVPEAETKKEEEEDDGEPVDESGLEA). Positions 128-149 (HAGHDHEHDLGTKVPEAETKKE) are enriched in basic and acidic residues. Over residues 150 to 162 (EEEDDGEPVDESG) the composition is skewed to acidic residues. A UBA domain is found at 163–202 (LEAKDIELVMAQANVSRKKAVKALRENDNDIVNSIMALSI).

It belongs to the NAC-alpha family. In terms of assembly, part of the nascent polypeptide-associated complex (NAC), consisting of egd2 and egd1. NAC associates with ribosomes via egd1.

Its subcellular location is the cytoplasm. The protein localises to the nucleus. Its function is as follows. Component of the nascent polypeptide-associated complex (NAC), a dynamic component of the ribosomal exit tunnel, protecting the emerging polypeptides from interaction with other cytoplasmic proteins to ensure appropriate nascent protein targeting. The NAC complex also promotes mitochondrial protein import by enhancing productive ribosome interactions with the outer mitochondrial membrane and blocks the inappropriate interaction of ribosomes translating non-secretory nascent polypeptides with translocation sites in the membrane of the endoplasmic reticulum. Egd2 may also be involved in transcription regulation. This chain is Nascent polypeptide-associated complex subunit alpha (egd2), found in Aspergillus oryzae (strain ATCC 42149 / RIB 40) (Yellow koji mold).